The sequence spans 2153 residues: RNA-directed RNA polymerase L (2153 aa).

5 residues coordinate Mn(2+): His36, Glu54, Asp97, Glu110, and Val111. The active-site For endonuclease activity is Lys124. The RdRp catalytic domain occupies 957 to 1143 (TGKKIRFKRK…AVNQEMWKSM (187 aa)). Asp1100 lines the Mg(2+) pocket.

This sequence belongs to the Bunyavirales RNA polymerase family. Interacts with the viral nucleoprotein. It depends on Mn(2+) as a cofactor. The cofactor is Mg(2+).

The protein localises to the host cytoplasm. The protein resides in the host perinuclear region. It catalyses the reaction RNA(n) + a ribonucleoside 5'-triphosphate = RNA(n+1) + diphosphate. RNA-dependent RNA polymerase, which is responsible for the replication and transcription of the viral RNA genome using antigenomic RNA as an intermediate. During transcription, synthesizes subgenomic RNAs and assures their capping by a cap-snatching mechanism, which involves the endonuclease activity cleaving the host capped pre-mRNAs. These short capped RNAs are then used as primers for viral transcription. Cleaves ssRNA substrates but not DNA. Seems to downregulate the expression of its own and heterologous mRNAs through its endonuclease activity. This Black Creek Canal orthohantavirus (BCCV) protein is RNA-directed RNA polymerase L.